The sequence spans 318 residues: Methionyl-tRNA formyltransferase (318 aa).

A (6S)-5,6,7,8-tetrahydrofolate-binding site is contributed by 112-115 (SILP).

The protein belongs to the Fmt family.

The enzyme catalyses L-methionyl-tRNA(fMet) + (6R)-10-formyltetrahydrofolate = N-formyl-L-methionyl-tRNA(fMet) + (6S)-5,6,7,8-tetrahydrofolate + H(+). In terms of biological role, attaches a formyl group to the free amino group of methionyl-tRNA(fMet). The formyl group appears to play a dual role in the initiator identity of N-formylmethionyl-tRNA by promoting its recognition by IF2 and preventing the misappropriation of this tRNA by the elongation apparatus. The polypeptide is Methionyl-tRNA formyltransferase (Shewanella sp. (strain ANA-3)).